A 264-amino-acid chain; its full sequence is uncharacterized protein (264 aa).

A signal peptide spans 1–21 (MMWNYFVTCIVLYANIISIHT). The disordered stretch occupies residues 182–247 (QQPNAAQVPT…AANNGLDLTS (66 aa)). The span at 190 to 213 (PTTSQQQPTSNTGGQQPPTNASNP) shows a compositional bias: low complexity. Asn209 carries N-linked (GlcNAc...) asparagine glycosylation. A compositionally biased stretch (pro residues) spans 214-226 (PTNPQPTPTPAQP). The segment covering 230 to 247 (GTQVQQTPAANNGLDLTS) has biased composition (polar residues).

In terms of tissue distribution, component of the acid-insoluble and acid-soluble organic matrix of calcified layers of the shell (at protein level).

The protein localises to the secreted. This is an uncharacterized protein from Lottia gigantea (Giant owl limpet).